Consider the following 911-residue polypeptide: Protein translocase subunit SecA (911 aa).

Residues Gln-87, 105 to 109, and Asp-510 each bind ATP; that span reads GEGKT. The Zn(2+) site is built by Cys-896, Cys-898, Cys-907, and His-908.

Belongs to the SecA family. In terms of assembly, monomer and homodimer. Part of the essential Sec protein translocation apparatus which comprises SecA, SecYEG and auxiliary proteins SecDF-YajC and YidC. Zn(2+) serves as cofactor.

The protein localises to the cell inner membrane. Its subcellular location is the cytoplasm. The catalysed reaction is ATP + H2O + cellular proteinSide 1 = ADP + phosphate + cellular proteinSide 2.. Part of the Sec protein translocase complex. Interacts with the SecYEG preprotein conducting channel. Has a central role in coupling the hydrolysis of ATP to the transfer of proteins into and across the cell membrane, serving both as a receptor for the preprotein-SecB complex and as an ATP-driven molecular motor driving the stepwise translocation of polypeptide chains across the membrane. This Acinetobacter baumannii (strain SDF) protein is Protein translocase subunit SecA.